The sequence spans 476 residues: Proline--tRNA ligase 2 (476 aa).

The protein belongs to the class-II aminoacyl-tRNA synthetase family. ProS type 3 subfamily. Homodimer.

The protein localises to the cytoplasm. The enzyme catalyses tRNA(Pro) + L-proline + ATP = L-prolyl-tRNA(Pro) + AMP + diphosphate. Functionally, catalyzes the attachment of proline to tRNA(Pro) in a two-step reaction: proline is first activated by ATP to form Pro-AMP and then transferred to the acceptor end of tRNA(Pro). The sequence is that of Proline--tRNA ligase 2 from Bacillus thuringiensis subsp. konkukian (strain 97-27).